The following is a 140-amino-acid chain: Putative pre-16S rRNA nuclease (140 aa).

Belongs to the YqgF nuclease family.

The protein resides in the cytoplasm. Functionally, could be a nuclease involved in processing of the 5'-end of pre-16S rRNA. This Mycoplasma pneumoniae (strain ATCC 29342 / M129 / Subtype 1) (Mycoplasmoides pneumoniae) protein is Putative pre-16S rRNA nuclease.